Consider the following 157-residue polypeptide: Protein-export protein SecB (157 aa).

The protein belongs to the SecB family. In terms of assembly, homotetramer, a dimer of dimers. One homotetramer interacts with 1 SecA dimer.

Its subcellular location is the cytoplasm. In terms of biological role, one of the proteins required for the normal export of preproteins out of the cell cytoplasm. It is a molecular chaperone that binds to a subset of precursor proteins, maintaining them in a translocation-competent state. It also specifically binds to its receptor SecA. This chain is Protein-export protein SecB, found in Dichelobacter nodosus (strain VCS1703A).